We begin with the raw amino-acid sequence, 374 residues long: Type II methyltransferase M.BbvI (374 aa).

One can recognise an SAM-dependent MTase C5-type domain in the interval 3–347; sequence FRKGELFCGP…EAVLKTFARI (345 aa). Cys92 is an active-site residue.

This sequence belongs to the class I-like SAM-binding methyltransferase superfamily. C5-methyltransferase family.

It carries out the reaction a 2'-deoxycytidine in DNA + S-adenosyl-L-methionine = a 5-methyl-2'-deoxycytidine in DNA + S-adenosyl-L-homocysteine + H(+). In terms of biological role, a methylase, recognizes the double-stranded sequence 5'-GCAGC-3', methylates C-2 on both strands, and protects the DNA from cleavage by the BbvI endonuclease. In Brevibacillus brevis (Bacillus brevis), this protein is Type II methyltransferase M.BbvI (bbvIM).